The chain runs to 240 residues: Ribose-5-phosphate isomerase A (240 aa).

Residues 41-44 (TGST), 94-97 (DGAD), and 107-110 (KGGG) contribute to the substrate site. Residue Glu116 is the Proton acceptor of the active site. Position 134 (Lys134) interacts with substrate.

Belongs to the ribose 5-phosphate isomerase family. Homodimer.

The enzyme catalyses aldehydo-D-ribose 5-phosphate = D-ribulose 5-phosphate. The protein operates within carbohydrate degradation; pentose phosphate pathway; D-ribose 5-phosphate from D-ribulose 5-phosphate (non-oxidative stage): step 1/1. Catalyzes the reversible conversion of ribose-5-phosphate to ribulose 5-phosphate. The polypeptide is Ribose-5-phosphate isomerase A (Polaromonas sp. (strain JS666 / ATCC BAA-500)).